Consider the following 187-residue polypeptide: Adenylate kinase (187 aa).

10–15 contacts ATP; it reads GSGKGT. Positions 30 to 59 are NMP; that stretch reads STGDLLRAEVAAGSPLGVKAKEVMARGDLV. AMP contacts are provided by residues threonine 31, arginine 36, 57-59, 85-88, and glutamine 92; these read DLV and GYPR. Residues 126 to 136 form an LID region; the sequence is GRAKAEGREDD. Arginine 127 lines the ATP pocket. Positions 133 and 144 each coordinate AMP. Glycine 172 is a binding site for ATP.

The protein belongs to the adenylate kinase family. As to quaternary structure, monomer.

The protein resides in the cytoplasm. It catalyses the reaction AMP + ATP = 2 ADP. Its pathway is purine metabolism; AMP biosynthesis via salvage pathway; AMP from ADP: step 1/1. Its function is as follows. Catalyzes the reversible transfer of the terminal phosphate group between ATP and AMP. Plays an important role in cellular energy homeostasis and in adenine nucleotide metabolism. The chain is Adenylate kinase from Xanthomonas campestris pv. campestris (strain B100).